A 251-amino-acid chain; its full sequence is Probable transcriptional regulatory protein Blon_1155/BLIJ_1182 (251 aa).

The protein belongs to the TACO1 family.

It localises to the cytoplasm. This chain is Probable transcriptional regulatory protein Blon_1155/BLIJ_1182, found in Bifidobacterium longum subsp. infantis (strain ATCC 15697 / DSM 20088 / JCM 1222 / NCTC 11817 / S12).